A 378-amino-acid chain; its full sequence is Putative glutamate--cysteine ligase 2 (378 aa).

It belongs to the glutamate--cysteine ligase type 2 family. YbdK subfamily.

It catalyses the reaction L-cysteine + L-glutamate + ATP = gamma-L-glutamyl-L-cysteine + ADP + phosphate + H(+). Its function is as follows. ATP-dependent carboxylate-amine ligase which exhibits weak glutamate--cysteine ligase activity. This is Putative glutamate--cysteine ligase 2 from Leifsonia xyli subsp. xyli (strain CTCB07).